The chain runs to 135 residues: Probable disulfide formation protein (135 aa).

Residues 7-26 (SYCLYLAWLFSCIGTLMSVY) traverse the membrane as a helical segment. Cysteines 36 and 39 form a disulfide. Transmembrane regions (helical) follow at residues 41-60 (YQRI…AYRE) and 67-84 (YTLP…YQVC). Residues cysteine 96 and cysteine 101 are joined by a disulfide bond. The chain crosses the membrane as a helical span at residues 109 to 131 (GFITMPMASAAAFCAIACLLVLA).

This sequence belongs to the DsbB family. BdbC subfamily.

It localises to the cell inner membrane. Its function is as follows. Required for disulfide bond formation in some proteins. The sequence is that of Probable disulfide formation protein from Chlamydia trachomatis serovar D (strain ATCC VR-885 / DSM 19411 / UW-3/Cx).